Consider the following 362-residue polypeptide: Protein RecA (362 aa).

77–84 (GPESSGKT) contributes to the ATP binding site.

This sequence belongs to the RecA family.

It is found in the cytoplasm. In terms of biological role, can catalyze the hydrolysis of ATP in the presence of single-stranded DNA, the ATP-dependent uptake of single-stranded DNA by duplex DNA, and the ATP-dependent hybridization of homologous single-stranded DNAs. It interacts with LexA causing its activation and leading to its autocatalytic cleavage. The chain is Protein RecA from Rhizobium leguminosarum bv. trifolii (strain WSM2304).